Here is an 805-residue protein sequence, read N- to C-terminus: Shutoff protein (805 aa).

The tract at residues 1 to 88 (MESVEKEDSL…QVGRGDQRHG (88 aa)) is disordered. Residues 18 to 29 (TTASTDAANAPT) show a composition bias toward polar residues. Composition is skewed to basic and acidic residues over residues 59 to 70 (RSVPTEDKKQDQ) and 79 to 88 (QVGRGDQRHG). Residues 280 to 345 (VMSELIVRRA…AVLVTVELEC (66 aa)) are binding to host EIF4G. The 119-residue stretch at 348-466 (RFFADPEMQR…DLWTAFNERS (119 aa)) folds into the RRM domain. Phosphotyrosine; by host occurs at positions 365 and 682. The interval 684–805 (DPQSGEELNP…AGTACSPTQP (122 aa)) is disordered. Positions 726–742 (GRGGILGQSGRGGFGRG) are enriched in gly residues. A compositionally biased stretch (basic residues) spans 754 to 763 (RSFRGRRGVR).

It belongs to the adenoviridae shutoff protein family. In terms of assembly, monomer. Interacts with hexon protein; this interaction allows chaperoning and trimerization of hexon proteins. Interacts (via N-terminus) with host initiation factor EIF4G (via C-terminus). Interacts (via RRM domain) with viral mRNAs that contain the tripartite leader; this interaction allows ribosome shunting and expression of viral late mRNAs. Might be cleaved by the viral protease. In terms of processing, phosphorylated. Tyrosine phosphorylation enhances preferential binding to tripartite leader mRNAs and allows ribosome shunting. Post-translationally, methylated. Asymmetric dimethylation by host PRMT1 of the Arg/Gly-rich region may regulate shutoff protein binding to hexon and promote the capsid assembly in the nucleus.

It is found in the host cytoplasm. Its function is as follows. Protein that inhibits host translation while promoting late viral translation by ribosome shunting. Blocks host cap-dependent translation by binding to eIF4G, displacing MKNK1 from cap initiation complexes and preventing EIF4E phosphorylation. Binds to the tripartite leader sequence of viral late mRNAs and recruits host eIF4G, PABPC1/poly-A binding protein and 40S ribosomes subunits on viral mRNAs, allowing ribosome shunting and efficient translation of late viral mRNAs even though conventional translation via ribosome scanning from the cap has been shut off in the host cell. During assembly, acts as a chaperone protein that helps hexon proteins assembly into trimers. In Homo sapiens (Human), this protein is Shutoff protein.